Consider the following 469-residue polypeptide: Pancreatic lipase-related protein 2 (469 aa).

Positions 1–17 are cleaved as a signal peptide; the sequence is MLPSWTIGLLLLATVRG. An intrachain disulfide couples C21 to C27. A glycan (N-linked (GlcNAc...) asparagine) is linked at N71. Residues 93–105 form a required for galactolipase activity region; the sequence is IHGFIDDGDSGWP. The cysteines at positions 109 and 120 are disulfide-linked. The Nucleophile role is filled by S171. Catalysis depends on D195, which acts as the Charge relay system. The Ca(2+) site is built by E206, R209, D211, and D214. The cysteines at positions 256 and 280 are disulfide-linked. Residues 257–279 form a required for galactolipase activity region; the sequence is QKNILSTIIDINGIWQGIQDFVA. Catalysis depends on H282, which acts as the Charge relay system. 2 disulfide bridges follow: C304–C315 and C318–C323. N353, N399, and N455 each carry an N-linked (GlcNAc...) asparagine glycan. One can recognise a PLAT domain in the interval 357 to 469; it reads WRYRVSVTLA…ENALQTLYPC (113 aa). A disulfide bridge links C453 with C469.

This sequence belongs to the AB hydrolase superfamily. Lipase family.

It localises to the secreted. Its subcellular location is the zymogen granule membrane. The protein localises to the cell projection. The protein resides in the neuron projection. It catalyses the reaction a triacylglycerol + H2O = a diacylglycerol + a fatty acid + H(+). The catalysed reaction is a 1,2-diacyl-3-O-(beta-D-galactosyl)-sn-glycerol + 2 H2O = 3-beta-D-galactosyl-sn-glycerol + 2 a fatty acid + 2 H(+). The enzyme catalyses 1,2,3-tri-(9Z-octadecenoyl)-glycerol + H2O = di-(9Z)-octadecenoylglycerol + (9Z)-octadecenoate + H(+). It carries out the reaction di-(9Z)-octadecenoylglycerol + H2O = (9Z-octadecenoyl)-glycerol + (9Z)-octadecenoate + H(+). It catalyses the reaction (9Z-octadecenoyl)-glycerol + H2O = glycerol + (9Z)-octadecenoate + H(+). The catalysed reaction is 1-(9Z-octadecenoyl)-glycerol + H2O = glycerol + (9Z)-octadecenoate + H(+). The enzyme catalyses 1,2,3-tripropanoylglycerol + H2O = dipropanoylglycerol + propanoate + H(+). It carries out the reaction 1,2,3-tributanoylglycerol + H2O = dibutanoylglycerol + butanoate + H(+). It catalyses the reaction 1,2,3-trioctanoylglycerol + H2O = dioctanoylglycerol + octanoate + H(+). The catalysed reaction is 1,2-didecanoylglycerol + H2O = decanoylglycerol + decanoate + H(+). The enzyme catalyses long chain 1,2-diacyl-3-O-beta-D-galactosyl-sn-glycerol + H2O = long chain acyl-3-O-beta-D-galactosyl-sn-glycerol + a fatty acid + H(+). It carries out the reaction 1,2-dioctanoyl-3-O-beta-D-galactosyl-sn-glycerol + H2O = octanoyl-3-(beta-D-galactosyl)-sn-glycerol + octanoate + H(+). It catalyses the reaction 1,2-didodecanoyl-3-beta-D-galactosyl-sn-glycerol + H2O = dodecanoyl-3-beta-D-galactosyl-sn-glycerol + dodecanoate + H(+). The catalysed reaction is 1-beta-D-galactosyl-2,3-didodecanoyl-sn-glycerol + H2O = 1-beta-D-galactosyl-dodecanoyl-sn-glycerol + dodecanoate + H(+). The enzyme catalyses a 1,2-diacyl-3-O-[alpha-D-galactosyl-(1-&gt;6)-beta-D-galactosyl]-sn-glycerol + H2O = acyl-3-O-[alpha-D-galactosyl-(1-&gt;6)-beta-D-galactosyl]-sn-glycerol + a fatty acid + H(+). It carries out the reaction long chain 1,2-diacyl-3-O-[alpha-D-galactosyl-(1-&gt;6)-beta-D-galactosyl]-sn-glycerol + H2O = long chain acyl-3-O-[alpha-D-galactosyl-(1-&gt;6)-beta-D-galactosyl]-sn-glycerol + a fatty acid + H(+). It catalyses the reaction 1,2-dioctanoyl-3-O-[alpha-D-galactosyl-(1-&gt;6)-beta-D-galactosyl]-sn-glycerol + H2O = octanoyl-3-O-[alpha-D-galactosyl-(1-&gt;6)-beta-D-galactosyl]-sn-glycerol + octanoate + H(+). The catalysed reaction is 1,2-didodecanoyl-3-O-[alpha-D-galactosyl-(1-&gt;6)-beta-D-galactosyl]-sn-glycerol + H2O = dodecanoyl-3-O-[alpha-D-galactosyl-(1-&gt;6)-beta-D-galactosyl]-sn-glycerol + dodecanoate + H(+). The enzyme catalyses a 1,2-diacyl-sn-glycero-3-phosphocholine + H2O = a monoacyl-sn-glycero-3-phosphocholine + a fatty acid + H(+). It functions in the pathway glycerolipid metabolism; triacylglycerol degradation. Its pathway is glycolipid metabolism. In terms of biological role, lipase that primarily hydrolyzes triglycerides and galactosylglycerides. In neonates, may play a major role in pancreatic digestion of dietary fats such as milk fat globules enriched in long-chain triglycerides. Hydrolyzes short-, medium- and long-chain fatty acyls in triglycerides without apparent positional specificity. Can completely deacylate triacylglycerols. When the liver matures and bile salt synthesis increases, likely functions mainly as a galactolipase and monoacylglycerol lipase. Hydrolyzes monogalactosyldiglycerols (MGDG) and digalactosyldiacylglycerols (DGDG) present in a plant-based diet, releasing long-chain polyunsaturated fatty acids. Hydrolyzes medium- and long-chain fatty acyls in galactolipids. May act together with LIPF to hydrolyze partially digested triglycerides. Hydrolyzes long-chain monoglycerides with high efficiency. In cytotoxic T cells, contributes to perforin-dependent cell lysis, but is unlikely to mediate direct cytotoxicity. Also has low phospholipase activity. In neurons, required for the localization of the phospholipid 1-oleoyl-2-palmitoyl-PC (OPPC) to neurite tips through acyl chain remodeling of membrane phospholipids. The resulting OPPC-rich lipid membrane domain recruits the t-SNARE protein STX4 by selectively interacting with the STX4 transmembrane domain and this promotes surface expression of the dopamine transporter SLC6A3/DAT at neurite tips by facilitating fusion of SLC6A3-containing transport vesicles with the plasma membrane. The sequence is that of Pancreatic lipase-related protein 2 from Bos taurus (Bovine).